The chain runs to 130 residues: Small ribosomal subunit protein uS11 (130 aa).

It belongs to the universal ribosomal protein uS11 family. As to quaternary structure, part of the 30S ribosomal subunit. Interacts with proteins S7 and S18. Binds to IF-3.

Functionally, located on the platform of the 30S subunit, it bridges several disparate RNA helices of the 16S rRNA. Forms part of the Shine-Dalgarno cleft in the 70S ribosome. This is Small ribosomal subunit protein uS11 from Nitrobacter hamburgensis (strain DSM 10229 / NCIMB 13809 / X14).